A 99-amino-acid polypeptide reads, in one-letter code: Protein S100-A11 (99 aa).

At methionine 1 the chain carries N-acetylmethionine. Threonine 8 is subject to Phosphothreonine. EF-hand domains lie at 10-47 (RCIE…ELAA) and 53-88 (KDPG…LAIA). The Ca(2+) site is built by asparagine 29, lysine 31, glutamate 36, aspartate 66, aspartate 68, aspartate 70, glutamine 72, and glutamate 77.

This sequence belongs to the S-100 family. Homodimer; disulfide-linked. In terms of processing, phosphorylation at Thr-8 significantly suppresses homodimerization and promotes association with NCL/nucleolin which induces nuclear translocation.

It is found in the cytoplasm. It localises to the nucleus. Facilitates the differentiation and the cornification of keratinocytes. The polypeptide is Protein S100-A11 (S100A11) (Sus scrofa (Pig)).